A 293-amino-acid polypeptide reads, in one-letter code: Decaprenyl diphosphate synthase (293 aa).

Residues methionine 1–proline 24 are disordered. Aspartate 73 is a catalytic residue. Aspartate 73 provides a ligand contact to Mg(2+). Substrate contacts are provided by residues glycine 74–arginine 77, tryptophan 78, arginine 86, histidine 90, and serine 118–glutamate 120. Catalysis depends on asparagine 121, which acts as the Proton acceptor. Residues tryptophan 122, arginine 124, arginine 241, and arginine 247–serine 249 each bind substrate. Glutamate 260 serves as a coordination point for Mg(2+).

Belongs to the UPP synthase family. In terms of assembly, homodimer. Mg(2+) is required as a cofactor.

It is found in the cell membrane. The catalysed reaction is (2Z,6E)-farnesyl diphosphate + 7 isopentenyl diphosphate = (2Z,6Z,10Z,14Z,18Z,22Z,26Z,30Z,34E)-decaprenyl diphosphate + 7 diphosphate. It catalyses the reaction n isopentenyl diphosphate + (2E,6E)-farnesyl diphosphate = a di-trans,poly-cis-polyprenyl diphosphate + n diphosphate. In terms of biological role, catalyzes the sequential condensation of isopentenyl diphosphate (IPP) in the cis configuration with (2Z,6E)-farnesyl diphosphate (Z-FPP or EZ-FPP) generating the 50 carbon product trans,polycis-decaprenyl diphosphate. When (2E,6E)-farnesyl diphosphate (E-FPP or EE-FPP) is used in vitro, both primary products decaprenyl diphosphate and heptaprenyl diphosphate are synthesized. It is probably due to the fact that M.smegmatis synthesizes both (2E,6E,10E)-geranylgeranyl diphosphate (EEE-GGPP) and (2E,6E,10Z)-geranylgeranyl diphosphate (EEZ-GGPP). Can also accept many different allylic substrates, including E-geranyl diphosphate (E-GPP), neryl diphosphate (NPP), and all-trans-geranyl-geranyl diphosphate. This chain is Decaprenyl diphosphate synthase (uppS), found in Mycolicibacterium smegmatis (strain ATCC 700084 / mc(2)155) (Mycobacterium smegmatis).